The primary structure comprises 191 residues: Thymidine kinase (191 aa).

Residues 15 to 22 and 88 to 91 each bind ATP; these read GPMYSGKT and DEAQ. The Proton acceptor role is filled by E89. Positions 145, 148, 183, and 186 each coordinate Zn(2+).

The protein belongs to the thymidine kinase family. In terms of assembly, homotetramer.

The protein localises to the cytoplasm. It carries out the reaction thymidine + ATP = dTMP + ADP + H(+). The polypeptide is Thymidine kinase (Clostridium botulinum (strain Loch Maree / Type A3)).